The chain runs to 549 residues: Myotubularin-related protein 9 (549 aa).

Met-1 is modified (N-acetylmethionine). The GRAM domain occupies 4–99 (AELIKTPRVD…LNIASSIEAL (96 aa)). In terms of domain architecture, Myotubularin phosphatase spans 123–498 (GWHSFLPEQE…QSLQLWEGIF (376 aa)). Residues 508-542 (LDEAYEEMVNIIEYNKELQAKVNLLRRQLAELETE) adopt a coiled-coil conformation. Ser-548 bears the Phosphoserine mark.

It belongs to the protein-tyrosine phosphatase family. Non-receptor class myotubularin subfamily. As to quaternary structure, homodimer. Heterodimer (via C-terminus) with lipid phosphatase MTMR6 (via C-terminus). Heterodimer (via coiled coil domain) with lipid phosphatase MTMR7 (via C-terminus). Heterodimer with lipid phosphatase MTMR8.

Its subcellular location is the cytoplasm. The protein resides in the cell projection. The protein localises to the ruffle membrane. It localises to the perinuclear region. It is found in the endoplasmic reticulum. Functionally, acts as an adapter for myotubularin-related phosphatases. Increases lipid phosphatase MTMR6 catalytic activity, specifically towards phosphatidylinositol 3,5-bisphosphate, and MTMR6 binding affinity for phosphorylated phosphatidylinositols. Positively regulates lipid phosphatase MTMR7 catalytic activity. Increases MTMR8 catalytic activity towards phosphatidylinositol 3-phosphate. The formation of the MTMR6-MTMR9 complex, stabilizes both MTMR6 and MTMR9 protein levels. Stabilizes MTMR8 protein levels. Plays a role in the late stages of macropinocytosis possibly by regulating MTMR6-mediated dephosphorylation of phosphatidylinositol 3-phosphate in membrane ruffles. Negatively regulates autophagy, in part via its association with MTMR8. Negatively regulates DNA damage-induced apoptosis, in part via its association with MTMR6. Does not bind mono-, di- and tri-phosphorylated phosphatidylinositols, phosphatidic acid and phosphatidylserine. The chain is Myotubularin-related protein 9 (MTMR9) from Bos taurus (Bovine).